The chain runs to 408 residues: Metacaspase-1B (408 aa).

Residues 1–98 form a disordered region; it reads MYHRHSAPPP…PPLEAQQFGN (98 aa). 2 stretches are compositionally biased toward pro residues: residues 24–49 and 56–66; these read WPPP…FPPP and SPYPTPPPHSP. Residues histidine 199 and cysteine 255 contribute to the active site.

The protein belongs to the peptidase C14B family.

Involved in cell death (apoptosis). Required for the apoptotic-like loss of membrane phospholipid asymmetry at stationary phase and facilitates growth under conditions of endoplasmic reticulum stress. The polypeptide is Metacaspase-1B (casB) (Aspergillus fumigatus (strain CBS 144.89 / FGSC A1163 / CEA10) (Neosartorya fumigata)).